The primary structure comprises 324 residues: NAD(P)H-dependent D-xylose reductase xyl1 (324 aa).

Tyr50 acts as the Proton donor in catalysis. His112 provides a ligand contact to substrate. NAD(+) is bound by residues 168–169, 217–226, and 273–283; these read SN, SSFGPTGFME, and KTSRPEVMAQN.

This sequence belongs to the aldo/keto reductase family.

It catalyses the reaction an alditol + NAD(+) = an aldose + NADH + H(+). It carries out the reaction an alditol + NADP(+) = an aldose + NADPH + H(+). The catalysed reaction is xylitol + NAD(+) = D-xylose + NADH + H(+). The enzyme catalyses xylitol + NADP(+) = D-xylose + NADPH + H(+). It functions in the pathway carbohydrate metabolism; D-xylose degradation. It participates in carbohydrate degradation; L-arabinose degradation via L-arabinitol; D-xylulose 5-phosphate from L-arabinose (fungal route): step 1/5. Functionally, catalyzes the initial reaction in the xylose utilization pathway by reducing D-xylose into xylitol. Xylose is a major component of hemicelluloses such as xylan. Most fungi utilize D-xylose via three enzymatic reactions, xylose reductase (XR), xylitol dehydrogenase (XDH), and xylulokinase, to form xylulose 5-phosphate, which enters pentose phosphate pathway. Also major aldose reductase in pentose and D-galactose catabolism. Reduces the pentose L-arabinose and the hexose D-galactose to their respective polyols. Responsible for extracellular beta-galactosidase formation and cellulase induction during growth on lactose. The polypeptide is NAD(P)H-dependent D-xylose reductase xyl1 (xyl1) (Hypocrea jecorina (Trichoderma reesei)).